The primary structure comprises 461 residues: CBL-interacting protein kinase 5 (461 aa).

Residues 12–266 (YELGRMLGQG…VEKLVEHPWF (255 aa)) enclose the Protein kinase domain. Residues 18 to 26 (LGQGTFAKV) and K41 each bind ATP. The active-site Proton acceptor is D134. The tract at residues 152–181 (DFGLSAFKECQKQDGLLHTTCGTPAYVAPE) is activation loop. Residues 300-334 (EGKAKEPASSLKPVSLNAFDIISLSKGFDLSGLFE) form the NAF domain. Residues 340–369 (KADSRFMTQKPASAIVSKLEQIAETESFKV) form a PPI region. The tract at residues 440–461 (HPSLAQSSTLTQSSKSISRHAI) is disordered. The segment covering 442 to 455 (SLAQSSTLTQSSKS) has biased composition (low complexity).

Belongs to the protein kinase superfamily. CAMK Ser/Thr protein kinase family. SNF1 subfamily. Mn(2+) is required as a cofactor.

It carries out the reaction L-seryl-[protein] + ATP = O-phospho-L-seryl-[protein] + ADP + H(+). The enzyme catalyses L-threonyl-[protein] + ATP = O-phospho-L-threonyl-[protein] + ADP + H(+). CIPK serine-threonine protein kinases interact with CBL proteins. Binding of a CBL protein to the regulatory NAF domain of CIPK protein lead to the activation of the kinase in a calcium-dependent manner. The protein is CBL-interacting protein kinase 5 (CIPK5) of Oryza sativa subsp. japonica (Rice).